Consider the following 72-residue polypeptide: U1-sicaritoxin-Sdo1a (72 aa).

Residues 1 to 24 form the signal peptide; the sequence is MMKKFTCFLLCATILCAIFCVSVA. Positions 25 to 41 are excised as a propeptide; the sequence is EKFHKMKSDIERDETPM. Disulfide bonds link cysteine 43-cysteine 61, cysteine 50-cysteine 64, and cysteine 60-cysteine 69.

In terms of tissue distribution, expressed by the venom gland.

The protein localises to the secreted. The protein is U1-sicaritoxin-Sdo1a of Hexophthalma dolichocephala (Afrotropical spider).